The chain runs to 168 residues: Transcription elongation factor GreB (168 aa).

A coiled-coil region spans residues 61–84; it reads KKMLREIDSRVRFLRKRLENLKVV.

The protein belongs to the GreA/GreB family. GreB subfamily.

In terms of biological role, necessary for efficient RNA polymerase transcription elongation past template-encoded arresting sites. The arresting sites in DNA have the property of trapping a certain fraction of elongating RNA polymerases that pass through, resulting in locked ternary complexes. Cleavage of the nascent transcript by cleavage factors such as GreA or GreB allows the resumption of elongation from the new 3'terminus. GreB releases sequences of up to 9 nucleotides in length. The protein is Transcription elongation factor GreB of Pseudomonas aeruginosa (strain ATCC 15692 / DSM 22644 / CIP 104116 / JCM 14847 / LMG 12228 / 1C / PRS 101 / PAO1).